The chain runs to 860 residues: uncharacterized protein (860 aa).

Composition is skewed to basic and acidic residues over residues L334–N345 and E536–K551. Disordered regions lie at residues L334–E360, E530–K551, A708–F798, and P813–I842. Acidic residues-rich tracts occupy residues D716–E725, E738–E750, and P813–Q824. Residues S744 and S748 each carry the phosphoserine modification.

This sequence belongs to the CBF/MAK21 family.

This is an uncharacterized protein from Schizosaccharomyces pombe (strain 972 / ATCC 24843) (Fission yeast).